The following is a 139-amino-acid chain: Putative pre-16S rRNA nuclease (139 aa).

It belongs to the YqgF nuclease family.

It is found in the cytoplasm. Could be a nuclease involved in processing of the 5'-end of pre-16S rRNA. The polypeptide is Putative pre-16S rRNA nuclease (Streptococcus gordonii (strain Challis / ATCC 35105 / BCRC 15272 / CH1 / DL1 / V288)).